Here is an 86-residue protein sequence, read N- to C-terminus: Toxin Tpa5 (86 aa).

Residues 1 to 20 form the signal peptide; that stretch reads MSIFPIALALLLIGLEEGEA. One can recognise an LCN-type CS-alpha/beta domain in the interval 22 to 85; sequence RDGYPISKNN…WGDPGTPPCM (64 aa). 4 disulfide bridges follow: cysteine 33-cysteine 84, cysteine 37-cysteine 58, cysteine 43-cysteine 64, and cysteine 47-cysteine 66.

It belongs to the long (4 C-C) scorpion toxin superfamily. Sodium channel inhibitor family. Beta subfamily. Expressed by the venom gland.

The protein localises to the secreted. Functionally, beta toxins bind voltage-independently at site-4 of sodium channels (Nav) and shift the voltage of activation toward more negative potentials thereby affecting sodium channel activation and promoting spontaneous and repetitive firing. The protein is Toxin Tpa5 of Tityus pachyurus (Colombian scorpion).